Here is a 280-residue protein sequence, read N- to C-terminus: Large ribosomal subunit protein uL2 (280 aa).

Positions 215-280 (GRRPHVRGSA…IQRANDKKEK (66 aa)) are disordered.

It belongs to the universal ribosomal protein uL2 family. Part of the 50S ribosomal subunit. Forms a bridge to the 30S subunit in the 70S ribosome.

Its function is as follows. One of the primary rRNA binding proteins. Required for association of the 30S and 50S subunits to form the 70S ribosome, for tRNA binding and peptide bond formation. It has been suggested to have peptidyltransferase activity; this is somewhat controversial. Makes several contacts with the 16S rRNA in the 70S ribosome. In Dictyoglomus thermophilum (strain ATCC 35947 / DSM 3960 / H-6-12), this protein is Large ribosomal subunit protein uL2.